Here is a 135-residue protein sequence, read N- to C-terminus: uncharacterized protein (135 aa).

Residues 56–135 (VQSHNRGINN…QKGQLKIEKV (80 aa)) form a disordered region. The span at 64-74 (NNRRRDQKRKQ) shows a compositional bias: basic residues. A compositionally biased stretch (polar residues) spans 77 to 89 (SIKQDNDLNVSSE). A compositionally biased stretch (basic and acidic residues) spans 108–135 (YKETPDLDEPGSREKRVSQKGQLKIEKV).

This is an uncharacterized protein from Schizosaccharomyces pombe (strain 972 / ATCC 24843) (Fission yeast).